Consider the following 545-residue polypeptide: Chaperonin GroEL (545 aa).

ATP-binding positions include 29 to 32, K50, 86 to 90, G414, 477 to 479, and D493; these read TMGP, DGTTT, and DAA.

Belongs to the chaperonin (HSP60) family. As to quaternary structure, forms a cylinder of 14 subunits composed of two heptameric rings stacked back-to-back. Interacts with the co-chaperonin GroES.

The protein resides in the cytoplasm. It carries out the reaction ATP + H2O + a folded polypeptide = ADP + phosphate + an unfolded polypeptide.. In terms of biological role, together with its co-chaperonin GroES, plays an essential role in assisting protein folding. The GroEL-GroES system forms a nano-cage that allows encapsulation of the non-native substrate proteins and provides a physical environment optimized to promote and accelerate protein folding. The protein is Chaperonin GroEL of Campylobacter jejuni subsp. jejuni serotype O:2 (strain ATCC 700819 / NCTC 11168).